We begin with the raw amino-acid sequence, 153 residues long: uncharacterized protein (153 aa).

The signal sequence occupies residues 1–22; that stretch reads MKLLKKGTTVLFVMIMAVMLVA. Residue cysteine 23 is the site of N-palmitoyl cysteine attachment. Cysteine 23 carries the S-diacylglycerol cysteine lipid modification. The interval 121–153 is disordered; sequence LPGMASTGDVSKGISMKESEKMLKSQGFKEVEK. Residues 135-153 show a composition bias toward basic and acidic residues; it reads SMKESEKMLKSQGFKEVEK.

To E.coli YehR.

It is found in the cell membrane. This is an uncharacterized protein from Listeria innocua serovar 6a (strain ATCC BAA-680 / CLIP 11262).